The chain runs to 208 residues: dTTP/UTP pyrophosphatase (208 aa).

Positions 28–48 (DRIHPADIDETPQRAEHPRSL) are disordered. D79 acts as the Proton acceptor in catalysis.

It belongs to the Maf family. YhdE subfamily. Requires a divalent metal cation as cofactor.

The protein resides in the cytoplasm. The catalysed reaction is dTTP + H2O = dTMP + diphosphate + H(+). The enzyme catalyses UTP + H2O = UMP + diphosphate + H(+). Its function is as follows. Nucleoside triphosphate pyrophosphatase that hydrolyzes dTTP and UTP. May have a dual role in cell division arrest and in preventing the incorporation of modified nucleotides into cellular nucleic acids. The sequence is that of dTTP/UTP pyrophosphatase from Brucella abortus (strain 2308).